The chain runs to 137 residues: Large ribosomal subunit protein uL16 (137 aa).

It belongs to the universal ribosomal protein uL16 family. Part of the 50S ribosomal subunit.

Functionally, binds 23S rRNA and is also seen to make contacts with the A and possibly P site tRNAs. This chain is Large ribosomal subunit protein uL16, found in Spiroplasma kunkelii.